The following is a 421-amino-acid chain: Proton/sodium-glutamate symport protein (421 aa).

At 1-3 (MRK) the chain is on the cytoplasmic side. A helical membrane pass occupies residues 4–24 (IGLAWQIFIGLILGIIVGAIF). The Extracellular portion of the chain corresponds to 25–43 (YGNPKVATYLQPIGDIFLR). A helical membrane pass occupies residues 44–64 (LIKMIVIPIVISSLVVGVASV). Over 65-77 (GDLKKLGKLGGKT) the chain is Cytoplasmic. A helical membrane pass occupies residues 78-98 (IIYFEIITTIAIVVGLLAANI). Topologically, residues 99-148 (FQPGTGVNMKSLEKTDIQSYVDTTNEVQHHSMVETFVNIVPKNIFESLTK) are extracellular. A helical transmembrane segment spans residues 149–169 (GDMLPIIFFSVMFGLGVAAIG). Topologically, residues 170 to 198 (EKGKPVLQFFQGTAEAMFYVTNQIMKFAP) are cytoplasmic. Residues 199–219 (FGVFALIGVTVSKFGVESLIP) form a helical membrane-spanning segment. Over 220–222 (LSK) the chain is Extracellular. The helical transmembrane segment at 223–243 (LVIVVYATMVFFIFVVLGGVA) threads the bilayer. Residue lysine 244 is a topological domain, cytoplasmic. The helical transmembrane segment at 245-265 (LFGINIFHIIKILKDELILAY) threads the bilayer. The Extracellular segment spans residues 266-306 (STASSETVLPKIMEKMENFGCPKAITSFVIPTGYSFNLDGS). A helical membrane pass occupies residues 307–327 (TLYQALAAIFIAQLYGIDMPI). Over 328–330 (SQQ) the chain is Cytoplasmic. 2 helical membrane-spanning segments follow: residues 331–351 (ISLL…PGVS) and 352–372 (FVVL…LAFI). Topologically, residues 373–421 (AGIDRILDMARTAVNVIGNSLAAIIMSKWEGQYNEEKGKQYIAQLQQSA) are cytoplasmic.

The protein belongs to the dicarboxylate/amino acid:cation symporter (DAACS) (TC 2.A.23) family. As to quaternary structure, homotrimer.

Its subcellular location is the cell membrane. This carrier protein is part of the Na(+)-dependent, binding-protein-independent glutamate-aspartate transport system. The sequence is that of Proton/sodium-glutamate symport protein (gltT) from Geobacillus stearothermophilus (Bacillus stearothermophilus).